We begin with the raw amino-acid sequence, 545 residues long: Chaperonin GroEL (545 aa).

Residues 30 to 33, Lys51, 87 to 91, Gly415, and Asp495 each bind ATP; these read TLGP and DGTTT.

It belongs to the chaperonin (HSP60) family. As to quaternary structure, forms a cylinder of 14 subunits composed of two heptameric rings stacked back-to-back. Interacts with the co-chaperonin GroES.

It is found in the cytoplasm. The enzyme catalyses ATP + H2O + a folded polypeptide = ADP + phosphate + an unfolded polypeptide.. Together with its co-chaperonin GroES, plays an essential role in assisting protein folding. The GroEL-GroES system forms a nano-cage that allows encapsulation of the non-native substrate proteins and provides a physical environment optimized to promote and accelerate protein folding. In Shewanella baltica (strain OS155 / ATCC BAA-1091), this protein is Chaperonin GroEL.